Here is a 305-residue protein sequence, read N- to C-terminus: Ribosomal RNA small subunit methyltransferase H (305 aa).

Residues 30–32 (GGH), Asp-49, Phe-74, Asp-96, and Gln-103 each bind S-adenosyl-L-methionine.

Belongs to the methyltransferase superfamily. RsmH family.

The protein resides in the cytoplasm. The catalysed reaction is cytidine(1402) in 16S rRNA + S-adenosyl-L-methionine = N(4)-methylcytidine(1402) in 16S rRNA + S-adenosyl-L-homocysteine + H(+). Specifically methylates the N4 position of cytidine in position 1402 (C1402) of 16S rRNA. In Francisella tularensis subsp. novicida (strain U112), this protein is Ribosomal RNA small subunit methyltransferase H.